A 127-amino-acid polypeptide reads, in one-letter code: MSQFTLLGFIALGGAFGACSRYLISELCVVLLGRGFPYGTLTVNVIGSLLMGILMSSLNQGLIEAGPWRPIIGLGFLGALTTFSTFSMDNVILMQHGEFIKAGLNILLNVALSITACFIGYQLMMKS.

4 helical membrane-spanning segments follow: residues 4–24, 35–55, 71–91, and 99–119; these read FTLLGFIALGGAFGACSRYLI, GFPYGTLTVNVIGSLLMGILM, IIGLGFLGALTTFSTFSMDNV, and FIKAGLNILLNVALSITACFI. Na(+)-binding residues include Gly78 and Thr81.

It belongs to the fluoride channel Fluc/FEX (TC 1.A.43) family.

It is found in the cell inner membrane. It catalyses the reaction fluoride(in) = fluoride(out). Its activity is regulated as follows. Na(+) is not transported, but it plays an essential structural role and its presence is essential for fluoride channel function. In terms of biological role, fluoride-specific ion channel. Important for reducing fluoride concentration in the cell, thus reducing its toxicity. This Photobacterium profundum (strain SS9) protein is Fluoride-specific ion channel FluC.